The sequence spans 299 residues: Oxygen-dependent coproporphyrinogen-III oxidase (299 aa).

Residue serine 92 participates in substrate binding. A divalent metal cation contacts are provided by histidine 96 and histidine 106. Histidine 106 acts as the Proton donor in catalysis. 108–110 (NVR) is a substrate binding site. Histidine 145 and histidine 175 together coordinate a divalent metal cation. The segment at 239–274 (YVEFNLVYDRGTLFGLQSGGRAESILMSLPPRVRWE) is important for dimerization. 257–259 (GGR) contributes to the substrate binding site.

Belongs to the aerobic coproporphyrinogen-III oxidase family. In terms of assembly, homodimer. Requires a divalent metal cation as cofactor.

The protein localises to the cytoplasm. The catalysed reaction is coproporphyrinogen III + O2 + 2 H(+) = protoporphyrinogen IX + 2 CO2 + 2 H2O. It participates in porphyrin-containing compound metabolism; protoporphyrin-IX biosynthesis; protoporphyrinogen-IX from coproporphyrinogen-III (O2 route): step 1/1. In terms of biological role, involved in the heme biosynthesis. Catalyzes the aerobic oxidative decarboxylation of propionate groups of rings A and B of coproporphyrinogen-III to yield the vinyl groups in protoporphyrinogen-IX. This chain is Oxygen-dependent coproporphyrinogen-III oxidase, found in Xanthomonas oryzae pv. oryzae (strain MAFF 311018).